A 1103-amino-acid polypeptide reads, in one-letter code: Centrosomal protein of 126 kDa (1103 aa).

Low complexity predominate over residues 1 to 12 (MLAGRPGAQSAG). Positions 1–36 (MLAGRPGAQSAGAGVGAGPPDAPGARDGGGRPRPGA) are disordered. 2 coiled-coil regions span residues 43–116 (HLEK…FQRA) and 182–222 (QKHL…KLLE). Disordered regions lie at residues 380–409 (NTAE…ESPT) and 723–812 (ESKA…PGQS). Over residues 723–735 (ESKAPVHASDSKT) the composition is skewed to basic and acidic residues. Positions 736–748 (QKTKPQRGVKFTR) are enriched in basic residues. 2 stretches are compositionally biased toward polar residues: residues 763–784 (RKPT…QTQG) and 798–812 (NIKS…PGQS).

As to quaternary structure, interacts with DCTN1.

It is found in the midbody. The protein resides in the cytoplasm. Its subcellular location is the cytoskeleton. It localises to the microtubule organizing center. The protein localises to the centrosome. It is found in the cilium basal body. Functionally, participate in cytokinesis. Necessary for microtubules and mitotic spindle organization. Involved in primary cilium formation. The chain is Centrosomal protein of 126 kDa from Mus musculus (Mouse).